The sequence spans 296 residues: MIKWLCLFFSYILMVSSHSWLGLWLSMEMNSLSFIPIMIEESKENSLKYFLIQSVASVIFLASILNQSFSFLIPFALLIKIGAAPFHMWLVSISKSMSWKVLSLLMTFQKIGPLLGLAMLQFTNSFFIFISAFIGGLGGINQSNLRLIMAFSSVSHLSWLMVNMSSFFLMLVYYVTYLAILYFAVILLQQSGMYSLAQMNSNASLIYKASISFNLLSLAGLPPFLGFFIKWMSLEMNILSPLLVLALVVSSCFSVYFYFSIAMSSLLFPSEVKSKKMEIPGILSMGFNIFLPLFFL.

Transmembrane regions (helical) follow at residues 5–25 (LCLFFSYILMVSSHSWLGLWL), 49–69 (YFLIQSVASVIFLASILNQSF), 71–91 (FLIPFALLIKIGAAPFHMWLV), 114–134 (LLGLAMLQFTNSFFIFISAFI), 167–187 (FFLMLVYYVTYLAILYFAVIL), 209–229 (ASISFNLLSLAGLPPFLGFFI), 242–262 (LLVLALVVSSCFSVYFYFSIA), and 276–296 (KMEIPGILSMGFNIFLPLFFL).

This sequence belongs to the complex I subunit 2 family.

The protein resides in the mitochondrion inner membrane. The enzyme catalyses a ubiquinone + NADH + 5 H(+)(in) = a ubiquinol + NAD(+) + 4 H(+)(out). Its function is as follows. Core subunit of the mitochondrial membrane respiratory chain NADH dehydrogenase (Complex I) that is believed to belong to the minimal assembly required for catalysis. Complex I functions in the transfer of electrons from NADH to the respiratory chain. The immediate electron acceptor for the enzyme is believed to be ubiquinone. The chain is NADH-ubiquinone oxidoreductase chain 2 (ND2) from Artemia franciscana (Brine shrimp).